We begin with the raw amino-acid sequence, 93 residues long: MARPRISISMICLLILIVGFVLQSSQARKVLVPYGTSKGLFLSALPKGNVPPSGPSDKGHTSPPDDTDQRMVPENSPEIYRRLESVPSPGVGH.

Positions 1 to 27 (MARPRISISMICLLILIVGFVLQSSQA) are cleaved as a signal peptide. The propeptide occupies 28 to 78 (RKVLVPYGTSKGLFLSALPKGNVPPSGPSDKGHTSPPDDTDQRMVPENSPE). The tract at residues 45–93 (LPKGNVPPSGPSDKGHTSPPDDTDQRMVPENSPEIYRRLESVPSPGVGH) is disordered. Residues Pro87 and Pro89 each carry the hydroxyproline modification.

It belongs to the C-terminally encoded plant signaling peptide (CEP) family. Interacts with CEP receptors (e.g. CEPR1 and CEPR2). In terms of processing, the mature small signaling peptide is generated by proteolytic processing of the longer precursor.

The protein resides in the secreted. Its subcellular location is the extracellular space. The protein localises to the apoplast. Its function is as follows. Extracellular signaling peptide that may regulate primary root growth rate and systemic nitrogen (N)-demand signaling. The polypeptide is Precursor of CEP13 (Arabidopsis thaliana (Mouse-ear cress)).